A 180-amino-acid chain; its full sequence is Dual-action ribosomal maturation protein DarP (180 aa).

The span at 1–13 (MKPDKTENTEHGI) shows a compositional bias: basic and acidic residues. Residues 1–21 (MKPDKTENTEHGIEPVSKTKR) form a disordered region.

This sequence belongs to the DarP family.

The protein resides in the cytoplasm. Its function is as follows. Member of a network of 50S ribosomal subunit biogenesis factors which assembles along the 30S-50S interface, preventing incorrect 23S rRNA structures from forming. Promotes peptidyl transferase center (PTC) maturation. This chain is Dual-action ribosomal maturation protein DarP, found in Methylobacillus flagellatus (strain ATCC 51484 / DSM 6875 / VKM B-1610 / KT).